The sequence spans 357 residues: Peptide chain release factor 1 (357 aa).

Residue Gln234 is modified to N5-methylglutamine. The tract at residues 284-304 is disordered; it reads RIEGERSEDRKSKIGTGDRSE.

Belongs to the prokaryotic/mitochondrial release factor family. In terms of processing, methylated by PrmC. Methylation increases the termination efficiency of RF1.

Its subcellular location is the cytoplasm. Functionally, peptide chain release factor 1 directs the termination of translation in response to the peptide chain termination codons UAG and UAA. This is Peptide chain release factor 1 from Pelagibacter ubique (strain HTCC1062).